We begin with the raw amino-acid sequence, 294 residues long: NADH-cytochrome b5 reductase 2 (294 aa).

The helical transmembrane segment at 11-27 (VLLPVVAAATSIGLVYH) threads the bilayer. The FAD-binding FR-type domain maps to 45–149 (DEWIDLKLKK…KGPIVKWKWE (105 aa)). 152–187 (QFQSIALIGGGTGITPLYQLLHEITKNPEDKTKVKL) is a binding site for FAD.

Belongs to the flavoprotein pyridine nucleotide cytochrome reductase family. FAD serves as cofactor.

The protein resides in the mitochondrion outer membrane. The enzyme catalyses 2 Fe(III)-[cytochrome b5] + NADH = 2 Fe(II)-[cytochrome b5] + NAD(+) + H(+). Its function is as follows. May mediate the reduction of outer membrane cytochrome b5. In Meyerozyma guilliermondii (strain ATCC 6260 / CBS 566 / DSM 6381 / JCM 1539 / NBRC 10279 / NRRL Y-324) (Yeast), this protein is NADH-cytochrome b5 reductase 2 (MCR1).